The sequence spans 245 residues: Large ribosomal subunit protein uL3 (245 aa).

Gln152 is modified (N5-methylglutamine). The segment at 224–245 (RSKAVQAEAAAPAEAAAPEGDN) is disordered. Residues 230-245 (AEAAAPAEAAAPEGDN) are compositionally biased toward low complexity.

It belongs to the universal ribosomal protein uL3 family. Part of the 50S ribosomal subunit. Forms a cluster with proteins L14 and L19. Post-translationally, methylated by PrmB.

Functionally, one of the primary rRNA binding proteins, it binds directly near the 3'-end of the 23S rRNA, where it nucleates assembly of the 50S subunit. This Paracoccus denitrificans (strain Pd 1222) protein is Large ribosomal subunit protein uL3.